Reading from the N-terminus, the 79-residue chain is Putative membrane protein insertion efficiency factor (79 aa).

It belongs to the UPF0161 family.

It is found in the cell inner membrane. Functionally, could be involved in insertion of integral membrane proteins into the membrane. The chain is Putative membrane protein insertion efficiency factor from Synechocystis sp. (strain ATCC 27184 / PCC 6803 / Kazusa).